A 603-amino-acid polypeptide reads, in one-letter code: Linalool synthase Tps-5031L19, chloroplastic (603 aa).

A chloroplast-targeting transit peptide spans 1 to 36; that stretch reads MSSMRTYVAIMKKPSVEHVDNVDKKASKPSWRVSLS. R322, D359, D363, R500, and D503 together coordinate (2E)-geranyl diphosphate. The Mg(2+) site is built by D359 and D363. Residues 359-363 carry the DDXXD motif motif; the sequence is DDVYD. Mg(2+) is bound by residues D503, T507, and E511.

The protein belongs to the terpene synthase family. Tpsb subfamily. As to quaternary structure, monomer. Mg(2+) serves as cofactor. The cofactor is Mn(2+).

The protein localises to the plastid. It is found in the chloroplast. It carries out the reaction (2E)-geranyl diphosphate + H2O = linalool + diphosphate. It functions in the pathway secondary metabolite biosynthesis; terpenoid biosynthesis. Its function is as follows. Monoterpene synthase (mono-TPS) involved in the biosynthesis of monoterpenes natural products. Catalyzes the conversion of (2E)-geranyl diphosphate (GPP) into linalool. The protein is Linalool synthase Tps-5031L19, chloroplastic of Perilla frutescens var. hirtella (Perilla citriodora).